The primary structure comprises 310 residues: N-acetyl-gamma-glutamyl-phosphate reductase (310 aa).

Cys117 is a catalytic residue.

Belongs to the NAGSA dehydrogenase family. Type 2 subfamily.

Its subcellular location is the cytoplasm. The enzyme catalyses N-acetyl-L-glutamate 5-semialdehyde + phosphate + NADP(+) = N-acetyl-L-glutamyl 5-phosphate + NADPH + H(+). The protein operates within amino-acid biosynthesis; L-arginine biosynthesis; N(2)-acetyl-L-ornithine from L-glutamate: step 3/4. In terms of biological role, catalyzes the NADPH-dependent reduction of N-acetyl-5-glutamyl phosphate to yield N-acetyl-L-glutamate 5-semialdehyde. The chain is N-acetyl-gamma-glutamyl-phosphate reductase from Brucella suis (strain ATCC 23445 / NCTC 10510).